The primary structure comprises 475 residues: Aspartyl/glutamyl-tRNA(Asn/Gln) amidotransferase subunit B (475 aa).

This sequence belongs to the GatB/GatE family. GatB subfamily. In terms of assembly, heterotrimer of A, B and C subunits.

The catalysed reaction is L-glutamyl-tRNA(Gln) + L-glutamine + ATP + H2O = L-glutaminyl-tRNA(Gln) + L-glutamate + ADP + phosphate + H(+). It catalyses the reaction L-aspartyl-tRNA(Asn) + L-glutamine + ATP + H2O = L-asparaginyl-tRNA(Asn) + L-glutamate + ADP + phosphate + 2 H(+). In terms of biological role, allows the formation of correctly charged Asn-tRNA(Asn) or Gln-tRNA(Gln) through the transamidation of misacylated Asp-tRNA(Asn) or Glu-tRNA(Gln) in organisms which lack either or both of asparaginyl-tRNA or glutaminyl-tRNA synthetases. The reaction takes place in the presence of glutamine and ATP through an activated phospho-Asp-tRNA(Asn) or phospho-Glu-tRNA(Gln). This chain is Aspartyl/glutamyl-tRNA(Asn/Gln) amidotransferase subunit B, found in Chlorobium phaeobacteroides (strain BS1).